Here is a 127-residue protein sequence, read N- to C-terminus: Fluoride-specific ion channel FluC 1 (127 aa).

The next 4 membrane-spanning stretches (helical) occupy residues 4-24 (TLLAVFIGGGVGSMARWLVSL), 35-55 (VGTLIVNLVGAFIIGLTLALF), 71-91 (TGFCGGLTTFSTFSVEVVYLI), and 101-121 (GTILLNVAGSLAMTMLAFILV). Na(+) contacts are provided by Gly75 and Thr78.

Belongs to the fluoride channel Fluc/FEX (TC 1.A.43) family.

Its subcellular location is the cell inner membrane. The enzyme catalyses fluoride(in) = fluoride(out). Na(+) is not transported, but it plays an essential structural role and its presence is essential for fluoride channel function. Fluoride-specific ion channel. Important for reducing fluoride concentration in the cell, thus reducing its toxicity. This chain is Fluoride-specific ion channel FluC 1, found in Yersinia pseudotuberculosis serotype I (strain IP32953).